The primary structure comprises 296 residues: uncharacterized protein (296 aa).

The next 6 helical transmembrane spans lie at 10–29, 36–58, 112–131, 188–210, 241–260, and 273–295; these read FSTL…FSLL, YIVL…YYIL, FFAL…MFVT, ILIF…LYLR, MMYG…SAYF, and MYIS…VTYI.

The protein resides in the cell membrane. This is an uncharacterized protein from Clostridium acetobutylicum (strain ATCC 824 / DSM 792 / JCM 1419 / IAM 19013 / LMG 5710 / NBRC 13948 / NRRL B-527 / VKM B-1787 / 2291 / W).